Reading from the N-terminus, the 188-residue chain is dCTP deaminase (188 aa).

Residues 111–116 (KSTYAR), 135–137 (TLE), Gln156, Tyr170, and Gln180 contribute to the dCTP site. Residue Glu137 is the Proton donor/acceptor of the active site.

The protein belongs to the dCTP deaminase family. Homotrimer.

It catalyses the reaction dCTP + H2O + H(+) = dUTP + NH4(+). It participates in pyrimidine metabolism; dUMP biosynthesis; dUMP from dCTP (dUTP route): step 1/2. Its function is as follows. Catalyzes the deamination of dCTP to dUTP. The polypeptide is dCTP deaminase (Pseudomonas savastanoi pv. phaseolicola (strain 1448A / Race 6) (Pseudomonas syringae pv. phaseolicola (strain 1448A / Race 6))).